Here is a 254-residue protein sequence, read N- to C-terminus: Bowman-Birk type bran trypsin inhibitor (254 aa).

Residues 1-22 (MSNTTMATSTILLFLLAGLAAA) form the signal peptide. Residues 23-118 (HGDGDTTIRL…KCTAALDGLS (96 aa)) constitute a propeptide that is removed on maturation. Repeats lie at residues 46 to 120 (KPWD…LSME), 121 to 187 (RPWK…LCTP), and 188 to 251 (RPWG…CKPR). 10 cysteine pairs are disulfide-bonded: Cys-51–Cys-248, Cys-125–Cys-185, Cys-126–Cys-143, Cys-152–Cys-159, Cys-156–Cys-172, Cys-193–Cys-248, Cys-194–Cys-209, Cys-199–Cys-207, Cys-216–Cys-223, and Cys-220–Cys-236. Residues 252–254 (AEN) constitute a propeptide that is removed on maturation.

Belongs to the Bowman-Birk serine protease inhibitor family. In terms of tissue distribution, expressed in roots, leaves and flowers.

The chain is Bowman-Birk type bran trypsin inhibitor (RBBI3.3) from Oryza sativa subsp. indica (Rice).